Here is a 239-residue protein sequence, read N- to C-terminus: Ribonuclease PH (239 aa).

Phosphate-binding positions include Arg86 and 124-126; that span reads GTR.

It belongs to the RNase PH family. As to quaternary structure, homohexameric ring arranged as a trimer of dimers.

The enzyme catalyses tRNA(n+1) + phosphate = tRNA(n) + a ribonucleoside 5'-diphosphate. In terms of biological role, phosphorolytic 3'-5' exoribonuclease that plays an important role in tRNA 3'-end maturation. Removes nucleotide residues following the 3'-CCA terminus of tRNAs; can also add nucleotides to the ends of RNA molecules by using nucleoside diphosphates as substrates, but this may not be physiologically important. Probably plays a role in initiation of 16S rRNA degradation (leading to ribosome degradation) during starvation. This chain is Ribonuclease PH, found in Psychromonas ingrahamii (strain DSM 17664 / CCUG 51855 / 37).